Reading from the N-terminus, the 425-residue chain is Serine--tRNA ligase 1 (425 aa).

230–232 contributes to the L-serine binding site; sequence TSE. ATP contacts are provided by residues 261 to 263 and valine 277; that span reads RRE. Glutamate 284 is an L-serine binding site. Residue 348 to 351 coordinates ATP; it reads ELTS. Threonine 382 serves as a coordination point for L-serine.

The protein belongs to the class-II aminoacyl-tRNA synthetase family. Type-1 seryl-tRNA synthetase subfamily. Homodimer. The tRNA molecule binds across the dimer.

The protein resides in the cytoplasm. It carries out the reaction tRNA(Ser) + L-serine + ATP = L-seryl-tRNA(Ser) + AMP + diphosphate + H(+). It catalyses the reaction tRNA(Sec) + L-serine + ATP = L-seryl-tRNA(Sec) + AMP + diphosphate + H(+). It functions in the pathway aminoacyl-tRNA biosynthesis; selenocysteinyl-tRNA(Sec) biosynthesis; L-seryl-tRNA(Sec) from L-serine and tRNA(Sec): step 1/1. Catalyzes the attachment of serine to tRNA(Ser). Is also able to aminoacylate tRNA(Sec) with serine, to form the misacylated tRNA L-seryl-tRNA(Sec), which will be further converted into selenocysteinyl-tRNA(Sec). The protein is Serine--tRNA ligase 1 of Streptomyces avermitilis (strain ATCC 31267 / DSM 46492 / JCM 5070 / NBRC 14893 / NCIMB 12804 / NRRL 8165 / MA-4680).